The sequence spans 1709 residues: Hybrid signal transduction histidine kinase L (1709 aa).

4 disordered regions span residues serine 52 to histidine 192, phenylalanine 206 to aspartate 276, threonine 413 to cysteine 535, and glutamine 554 to asparagine 615. Residues asparagine 53 to asparagine 87 are compositionally biased toward low complexity. Positions asparagine 88–leucine 100 are enriched in basic and acidic residues. The segment covering threonine 106–asparagine 148 has biased composition (low complexity). Residues serine 149–asparagine 170 are compositionally biased toward polar residues. 3 stretches are compositionally biased toward low complexity: residues threonine 413–serine 466, asparagine 486–cysteine 535, and glutamine 554–serine 576. The span at leucine 585–glutamine 610 shows a compositional bias: polar residues. Residues alanine 700–asparagine 771 enclose the PAS domain. The region spanning tryptophan 770 to leucine 822 is the PAC domain. In terms of domain architecture, Histidine kinase spans methionine 837–lysine 1059. Histidine 840 bears the Phosphohistidine; by autocatalysis mark. Disordered regions lie at residues leucine 1068–histidine 1112 and glutamine 1137–proline 1298. Composition is skewed to low complexity over residues leucine 1075–histidine 1112, glutamine 1137–glutamine 1153, and asparagine 1176–glutamine 1194. Positions histidine 1204–glutamine 1221 are enriched in basic residues. Composition is skewed to polar residues over residues asparagine 1244–serine 1257 and asparagine 1275–proline 1298. Response regulatory domains lie at lysine 1312 to leucine 1492 and lysine 1570 to glycine 1692. Aspartate 1366 carries the post-translational modification 4-aspartylphosphate. 2 stretches are compositionally biased toward low complexity: residues glutamine 1390–glutamine 1412 and lysine 1420–glycine 1440. The tract at residues glutamine 1390 to glycine 1440 is disordered. Aspartate 1622 is modified (4-aspartylphosphate).

Activation probably requires transfer of a phosphate group between a histidine in the kinase core (transmitter) domain and an aspartate of the receiver domain.

The catalysed reaction is ATP + protein L-histidine = ADP + protein N-phospho-L-histidine.. Acts as a receptor histidine kinase for a signal transduction pathway. This protein undergoes an ATP-dependent autophosphorylation at a conserved histidine residue in the kinase core, and a phosphoryl group is then transferred to a conserved aspartate residue in the receiver domain. In Dictyostelium discoideum (Social amoeba), this protein is Hybrid signal transduction histidine kinase L (dhkL).